Here is a 72-residue protein sequence, read N- to C-terminus: Cytochrome b-c1 complex subunit 9 (72 aa).

The Mitochondrial matrix portion of the chain corresponds to 1-27; it reads MESAARRSGGGVLEGFYRLVMRRTPVY. Residues 28-53 traverse the membrane as a helical segment; that stretch reads VTFVIAGALLGERAVDYGVKTLWEKN. The Mitochondrial intermembrane portion of the chain corresponds to 54-72; that stretch reads NVGKRYEDISVLGQRPVDE.

This sequence belongs to the UQCR10/QCR9 family. In terms of assembly, component of the ubiquinol-cytochrome c oxidoreductase (cytochrome b-c1 complex, complex III, CIII), a multisubunit enzyme composed of 3 respiratory subunits cytochrome b, cytochrome c1 and Rieske protein, 2 core protein subunits, and additional low-molecular weight protein subunits. The complex exists as an obligatory dimer and forms supercomplexes (SCs) in the inner mitochondrial membrane with cytochrome c oxidase (complex IV, CIV).

It localises to the mitochondrion inner membrane. In terms of biological role, component of the ubiquinol-cytochrome c oxidoreductase, a multisubunit transmembrane complex that is part of the mitochondrial electron transport chain which drives oxidative phosphorylation. The respiratory chain contains 3 multisubunit complexes succinate dehydrogenase (complex II, CII), ubiquinol-cytochrome c oxidoreductase (cytochrome b-c1 complex, complex III, CIII) and cytochrome c oxidase (complex IV, CIV), that cooperate to transfer electrons derived from NADH and succinate to molecular oxygen, creating an electrochemical gradient over the inner membrane that drives transmembrane transport and the ATP synthase. The cytochrome b-c1 complex catalyzes electron transfer from ubiquinol to cytochrome c, linking this redox reaction to translocation of protons across the mitochondrial inner membrane, with protons being carried across the membrane as hydrogens on the quinol. In the process called Q cycle, 2 protons are consumed from the matrix, 4 protons are released into the intermembrane space and 2 electrons are passed to cytochrome c. The sequence is that of Cytochrome b-c1 complex subunit 9 from Solanum tuberosum (Potato).